Here is a 232-residue protein sequence, read N- to C-terminus: tRNA (guanine-N(7)-)-methyltransferase (232 aa).

E63, E88, D115, and D137 together coordinate S-adenosyl-L-methionine. D137 is an active-site residue. Substrate-binding positions include K141, D173, and 211–214 (TRYE).

This sequence belongs to the class I-like SAM-binding methyltransferase superfamily. TrmB family.

The catalysed reaction is guanosine(46) in tRNA + S-adenosyl-L-methionine = N(7)-methylguanosine(46) in tRNA + S-adenosyl-L-homocysteine. The protein operates within tRNA modification; N(7)-methylguanine-tRNA biosynthesis. Catalyzes the formation of N(7)-methylguanine at position 46 (m7G46) in tRNA. This is tRNA (guanine-N(7)-)-methyltransferase from Agrobacterium fabrum (strain C58 / ATCC 33970) (Agrobacterium tumefaciens (strain C58)).